The chain runs to 492 residues: Cytochrome P450 monooxygenase MYCFIDRAFT_204672 (492 aa).

N-linked (GlcNAc...) asparagine glycosylation occurs at Asn-116. A helical transmembrane segment spans residues 269 to 293; sequence FLISMIFISAANGCVVSGAMLYSIA. Asn-335 carries N-linked (GlcNAc...) asparagine glycosylation. Cys-430 is a heme binding site.

Belongs to the cytochrome P450 family. Requires heme as cofactor.

It is found in the membrane. It functions in the pathway secondary metabolite biosynthesis. Functionally, cytochrome P450 monooxygenase; part of the gene cluster that mediates the biosynthesis of an emodin derivative that may be involved in black Sigatoka disease of banana. The pathway begins with the synthesis of atrochrysone thioester by the polyketide synthase PKS8-1. The atrochrysone carboxyl ACP thioesterase MYCFIDRAFT_190111 then breaks the thioester bond and releases the atrochrysone carboxylic acid from PKS8-1. The decarboxylase MYCFIDRAFT_34057 then catalyzes the concerted decarboxylation-elimination required to convert atochrysone carboxylic acid into emodin anthrone, which is further oxidized to emodin by the anthrone oxygenase MYCFIDRAFT_34418. The functions of the other tailoring enzymes as well as the final product of the cluster have still to be identified. The protein is Cytochrome P450 monooxygenase MYCFIDRAFT_204672 of Pseudocercospora fijiensis (strain CIRAD86) (Black leaf streak disease fungus).